Reading from the N-terminus, the 220-residue chain is Transcriptional regulatory protein SpaR (220 aa).

The 113-residue stretch at 3–115 (KILAVDDEKD…ELSARVNAHL (113 aa)) folds into the Response regulatory domain. A 4-aspartylphosphate modification is found at D51. Positions 124–220 (QSKRVISGFL…TVWGVGYKWE (97 aa)) form a DNA-binding region, ompR/PhoB-type.

Post-translationally, phosphorylated by SpaK.

The protein localises to the cytoplasm. Its function is as follows. Member of the two-component regulatory system SpaK/SpaR involved in the regulation of the biosynthesis of lantibiotic subtilin. SpaR may function as a regulatory protein. The chain is Transcriptional regulatory protein SpaR (spaR) from Bacillus subtilis.